An 860-amino-acid polypeptide reads, in one-letter code: Late endosome and vacuole interface protein 11 (860 aa).

The interval 19 to 45 is disordered; the sequence is EIINNSDHSSSHSTSHEEEDEEEDDTE. Positions 20–31 are enriched in low complexity; sequence IINNSDHSSSHS. Residues 35 to 45 show a composition bias toward acidic residues; sequence EEEDEEEDDTE. A BED-type zinc finger spans residues 84-138; sequence KNIAKFWSHFLAIEKKLTKVKCKHCGEILTRSDASLTKTFRSHLKTKHNISANKN. Zn(2+) contacts are provided by Cys-105, Cys-108, His-126, and His-131.

Belongs to the VID22 family.

The protein localises to the nucleus. Involved in vacuolar processing and morphology. This chain is Late endosome and vacuole interface protein 11 (ENV11), found in Saccharomyces cerevisiae (strain ATCC 204508 / S288c) (Baker's yeast).